A 613-amino-acid chain; its full sequence is MSSSVRLLLIVALLYTNSWAKTVKETLRITWEEGAPNGQARELIYTNGQFPGPPLIWDEGDDVEVTVWNEMAKNVTVHWHGLDQKDSPWSDGTPGLSQRPIQPGQSFVYKFKASPPGNHWYHSHEKMSLVDGLYGAIHIRPKEDRTGLWSQISQDKEDIKAMEKAARDPEYLVVSDWSQYTSEEYWKMSTDSGLLVFCLDSILVNGKGEVYCPGQEFLQKELAPGLVQDAFPPGTEVSDKGCFPADLDQVQGGPWNITKRPDLIPPRVQEGCVASKHENETIVVDPHRNNGWVSMHIVAAATIAQIAFSVDSHEFWLYEIDGNYVNPKKFVSAVMSAGETFSIMMKLDQEPGRYTMRVPNSGASQVLGAFAEMVYEGHERAEKSGRAYLSYGGNPTSPDVEKNSFFPWQLDTDHMSPWPANKPRPGKADEEHLLVLGRVGAPYKYTMNTKYLYPVDFQNNDPLLFYPDATCGTENDGLVLRTKNGSWVDLILQVSTLPGDTSSFEHFMHKHGSKTWRIGFGTGVWNYTSVEEAIQERPQDFNLETPGLRDTWITAFSIGGEAYWSVFRYYVDNPGPWLFHCHIELHLMGGMGIAILDGVDAWPEHIPEEYRLD.

The signal sequence occupies residues 1-20 (MSSSVRLLLIVALLYTNSWA). Plastocyanin-like domains are found at residues 29 to 142 (ITWE…IRPK), 171 to 359 (YLVV…MRVP), and 468 to 598 (DATC…ILDG). A glycan (N-linked (GlcNAc...) asparagine) is linked at Asn74. Residues His78, His80, His122, and His124 each contribute to the Cu cation site. Residues Asn256, Asn279, and Asn484 are each glycosylated (N-linked (GlcNAc...) asparagine). The Cu cation site is built by His506, His509, and His511. A glycan (N-linked (GlcNAc...) asparagine) is linked at Asn526. Cu cation-binding residues include His580, Cys581, His582, and His586.

It belongs to the multicopper oxidase family. Requires Cu cation as cofactor.

The protein resides in the cell surface. Its pathway is pigment biosynthesis. Functionally, laccase; part of the Pks1 gene cluster that mediates the biosynthesis of an anthraquinone derivative pigment that contributes to conidial pigmentation that provides protection from UV radiation, heat and cold stress. The polyketide synthase Pks1 produces 1-acetyl-2,4,6,8-tetrahydroxy-9,10-anthraquinone though condensation of acetyl-CoA with malonyl-CoA. The dehydratase EthD and the laccase Mlac1 further convert the anthraquinone derivative into the final conidial pigment. The sequence is that of Laccase 1 from Metarhizium acridum (strain CQMa 102).